The primary structure comprises 527 residues: Bifunctional pantoate ligase/cytidylate kinase (527 aa).

A pantoate--beta-alanine ligase region spans residues M1–L277. An ATP-binding site is contributed by M27–H34. Catalysis depends on H34, which acts as the Proton donor. Q58 contacts (R)-pantoate. Q58 is a binding site for beta-alanine. Residue G147–D150 coordinates ATP. Q153 is a binding site for (R)-pantoate. ATP-binding positions include V176 and L184–R187. The cytidylate kinase stretch occupies residues T278–G527. The interval G507 to G527 is disordered. Positions S511–G527 are enriched in polar residues.

In the N-terminal section; belongs to the pantothenate synthetase family. It in the C-terminal section; belongs to the cytidylate kinase family. Type 1 subfamily.

Its subcellular location is the cytoplasm. It carries out the reaction (R)-pantoate + beta-alanine + ATP = (R)-pantothenate + AMP + diphosphate + H(+). The catalysed reaction is CMP + ATP = CDP + ADP. The enzyme catalyses dCMP + ATP = dCDP + ADP. The protein operates within cofactor biosynthesis; (R)-pantothenate biosynthesis; (R)-pantothenate from (R)-pantoate and beta-alanine: step 1/1. Catalyzes the condensation of pantoate with beta-alanine in an ATP-dependent reaction via a pantoyl-adenylate intermediate. In terms of biological role, catalyzes the transfer of a phosphate group from ATP to either CMP or dCMP to form CDP or dCDP and ADP, respectively. The chain is Bifunctional pantoate ligase/cytidylate kinase from Synechococcus elongatus (strain ATCC 33912 / PCC 7942 / FACHB-805) (Anacystis nidulans R2).